Here is a 346-residue protein sequence, read N- to C-terminus: Phosphoribosylformylglycinamidine cyclo-ligase (346 aa).

This sequence belongs to the AIR synthase family.

It localises to the cytoplasm. The catalysed reaction is 2-formamido-N(1)-(5-O-phospho-beta-D-ribosyl)acetamidine + ATP = 5-amino-1-(5-phospho-beta-D-ribosyl)imidazole + ADP + phosphate + H(+). It participates in purine metabolism; IMP biosynthesis via de novo pathway; 5-amino-1-(5-phospho-D-ribosyl)imidazole from N(2)-formyl-N(1)-(5-phospho-D-ribosyl)glycinamide: step 2/2. In Bacillus mycoides (strain KBAB4) (Bacillus weihenstephanensis), this protein is Phosphoribosylformylglycinamidine cyclo-ligase.